The primary structure comprises 180 residues: Inner membrane-spanning protein YciB (180 aa).

Helical transmembrane passes span 4 to 24 (FLSE…GGGI), 25 to 45 (QHAT…CYVI), 49 to 69 (VSKL…ITLI), 76 to 96 (IKIK…MSGI), 118 to 138 (ITLS…NEVV), and 150 to 170 (FKVF…LPLL).

The protein belongs to the YciB family.

It localises to the cell inner membrane. Its function is as follows. Plays a role in cell envelope biogenesis, maintenance of cell envelope integrity and membrane homeostasis. This chain is Inner membrane-spanning protein YciB, found in Rickettsia rickettsii (strain Iowa).